The primary structure comprises 124 residues: UPF0231 protein Sputcn32_0682 (124 aa).

This sequence belongs to the UPF0231 family.

The sequence is that of UPF0231 protein Sputcn32_0682 from Shewanella putrefaciens (strain CN-32 / ATCC BAA-453).